Here is a 129-residue protein sequence, read N- to C-terminus: NADH-ubiquinone oxidoreductase chain 3 (129 aa).

A run of 3 helical transmembrane segments spans residues 4–24 (FYMY…WLLA), 48–68 (AAFS…DLEI), and 82–102 (GLYG…AFIL).

This sequence belongs to the complex I subunit 3 family.

The protein resides in the mitochondrion membrane. It catalyses the reaction a ubiquinone + NADH + 5 H(+)(in) = a ubiquinol + NAD(+) + 4 H(+)(out). Its function is as follows. Core subunit of the mitochondrial membrane respiratory chain NADH dehydrogenase (Complex I) that is believed to belong to the minimal assembly required for catalysis. Complex I functions in the transfer of electrons from NADH to the respiratory chain. The immediate electron acceptor for the enzyme is believed to be ubiquinone. This chain is NADH-ubiquinone oxidoreductase chain 3 (NAD3), found in Candida albicans (strain SC5314 / ATCC MYA-2876) (Yeast).